A 593-amino-acid polypeptide reads, in one-letter code: Tyrosine-protein phosphatase non-receptor type 9 (593 aa).

An N-acetylmethionine modification is found at Met-1. The segment at 1-21 (MEPATAPRPDMAPELTPEEEQ) is disordered. The CRAL-TRIO domain maps to 84–243 (EEPLRSEILS…NLGGYIKIDL (160 aa)). One can recognise a Tyrosine-protein phosphatase domain in the interval 303–574 (IYEEYEDIRR…YFCYKAILEF (272 aa)). Substrate is bound by residues Asp-470, 515 to 521 (CSAGIGR), and Gln-559. Cys-515 serves as the catalytic Phosphocysteine intermediate.

It belongs to the protein-tyrosine phosphatase family. Non-receptor class 3 subfamily.

It localises to the cytoplasm. The catalysed reaction is O-phospho-L-tyrosyl-[protein] + H2O = L-tyrosyl-[protein] + phosphate. Protein-tyrosine phosphatase that could participate in the transfer of hydrophobic ligands or in functions of the Golgi apparatus. This chain is Tyrosine-protein phosphatase non-receptor type 9 (Ptpn9), found in Rattus norvegicus (Rat).